A 142-amino-acid chain; its full sequence is MKTFTAKPESVKRDWYVVDADGKTLGRLATELARRLRGKHKAEYTPHVDTGDYIIVLNAEKVAVTGNKRTDKVYYRHTGYVGGIKQATFEEMIARNPERVIEIAVKGMLPKGPLGRAMFRKLKVYAGTEHTHAAQQPQVLDI.

This sequence belongs to the universal ribosomal protein uL13 family. In terms of assembly, part of the 50S ribosomal subunit.

Functionally, this protein is one of the early assembly proteins of the 50S ribosomal subunit, although it is not seen to bind rRNA by itself. It is important during the early stages of 50S assembly. The sequence is that of Large ribosomal subunit protein uL13 from Serratia proteamaculans (strain 568).